The sequence spans 333 residues: L-lactate dehydrogenase B chain (333 aa).

Residues 29 to 57 and arginine 99 each bind NAD(+); that span reads GQVG…LEDK. Arginine 106, asparagine 138, and arginine 169 together coordinate substrate. Asparagine 138 contacts NAD(+). Histidine 193 functions as the Proton acceptor in the catalytic mechanism. Substrate is bound at residue threonine 248.

The protein belongs to the LDH/MDH superfamily. LDH family. As to quaternary structure, homotetramer.

The protein localises to the cytoplasm. It catalyses the reaction (S)-lactate + NAD(+) = pyruvate + NADH + H(+). Its pathway is fermentation; pyruvate fermentation to lactate; (S)-lactate from pyruvate: step 1/1. Functionally, interconverts simultaneously and stereospecifically pyruvate and lactate with concomitant interconversion of NADH and NAD(+). This Anas platyrhynchos (Mallard) protein is L-lactate dehydrogenase B chain (LDHB).